A 160-amino-acid chain; its full sequence is Transcription elongation factor GreA 2 (160 aa).

The stretch at 9 to 73 (MTEEGKVKLE…RIKTVEHMLQ (65 aa)) forms a coiled coil.

This sequence belongs to the GreA/GreB family.

Functionally, necessary for efficient RNA polymerase transcription elongation past template-encoded arresting sites. The arresting sites in DNA have the property of trapping a certain fraction of elongating RNA polymerases that pass through, resulting in locked ternary complexes. Cleavage of the nascent transcript by cleavage factors such as GreA or GreB allows the resumption of elongation from the new 3'terminus. GreA releases sequences of 2 to 3 nucleotides. This is Transcription elongation factor GreA 2 from Lactiplantibacillus plantarum (strain ATCC BAA-793 / NCIMB 8826 / WCFS1) (Lactobacillus plantarum).